The sequence spans 560 residues: Chaperonin GroEL 2 (560 aa).

Residues 29-32 (TLGP), Lys50, 86-90 (DGTTT), Gly414, and Asp494 each bind ATP. The disordered stretch occupies residues 524 to 546 (EDEDDDDGGGGGGGGMPAGGAGG). The segment covering 532–546 (GGGGGGGMPAGGAGG) has biased composition (gly residues).

This sequence belongs to the chaperonin (HSP60) family. Forms a cylinder of 14 subunits composed of two heptameric rings stacked back-to-back. Interacts with the co-chaperonin GroES.

It is found in the cytoplasm. It catalyses the reaction ATP + H2O + a folded polypeptide = ADP + phosphate + an unfolded polypeptide.. Its function is as follows. Together with its co-chaperonin GroES, plays an essential role in assisting protein folding. The GroEL-GroES system forms a nano-cage that allows encapsulation of the non-native substrate proteins and provides a physical environment optimized to promote and accelerate protein folding. This is Chaperonin GroEL 2 from Salinibacter ruber (strain DSM 13855 / M31).